Here is a 204-residue protein sequence, read N- to C-terminus: Urease accessory protein UreG (204 aa).

12-19 (GPVGSGKT) serves as a coordination point for GTP.

The protein belongs to the SIMIBI class G3E GTPase family. UreG subfamily. As to quaternary structure, homodimer. UreD, UreF and UreG form a complex that acts as a GTP-hydrolysis-dependent molecular chaperone, activating the urease apoprotein by helping to assemble the nickel containing metallocenter of UreC. The UreE protein probably delivers the nickel.

Its subcellular location is the cytoplasm. Functionally, facilitates the functional incorporation of the urease nickel metallocenter. This process requires GTP hydrolysis, probably effectuated by UreG. The chain is Urease accessory protein UreG from Pseudomonas fluorescens (strain SBW25).